Consider the following 3416-residue polypeptide: Genome polyprotein (3416 aa).

Residues 1–34 (MAKGAVLKGKGGGPPRRVPKETAKKTRQGPGRLP) form a disordered region. Topologically, residues 1–99 (MAKGAVLKGK…NRRRGKRRST (99 aa)) are cytoplasmic. Residues 97–117 (RSTTGLLTSILLACLATLVIS) constitute a propeptide, ER anchor for the capsid protein C, removed in mature form by serine protease NS3. A helical membrane pass occupies residues 100-120 (TGLLTSILLACLATLVISATI). Over 121–243 (RRERTGDMVI…HLTRVEGWVW (123 aa)) the chain is Extracellular. N145 is a glycosylation site (N-linked (GlcNAc...) asparagine; by host). The chain crosses the membrane as a helical span at residues 244–261 (KNKLLTMAFCAVVWMVTD). Residue S262 is a topological domain, cytoplasmic. The chain crosses the membrane as a helical span at residues 263–281 (LPTRFIVITVALCLAPTYA). Over 282–728 (TRCTHLQNRD…HTAFGAAFNT (447 aa)) the chain is Extracellular. Intrachain disulfides connect C284/C311, C341/C397, C341/C402, C355/C386, C373/C397, and C373/C402. A fusion peptide region spans residues 379-392 (DRGWGNHCGLFGKG). N435 carries an N-linked (GlcNAc...) asparagine; by host glycan. 2 disulfide bridges follow: C467–C571 and C588–C619. The helical transmembrane segment at 729 to 749 (IFGGVGFLPRILLGVALAWLG) threads the bilayer. At 750-756 (LNSRNPT) the chain is on the cytoplasmic side. Residues 757–777 (LSVGFLITGGLVLTMTLGVGA) form a helical membrane-spanning segment. At 778-1134 (DMGCAIDANR…RSMVLADNGA (357 aa)) the chain is on the extracellular side. Disulfide bonds link C781/C792, C832/C922, C957/C1002, C1059/C1108, C1070/C1092, and C1091/C1095. N-linked (GlcNAc...) asparagine; by host glycans are attached at residues N862, N985, and N1001. A helical transmembrane segment spans residues 1135–1155 (MLSEGGVPGIVAVFVVLELVI). The Cytoplasmic portion of the chain corresponds to 1156–1162 (RRRPTTG). Residues 1163–1183 (TSVVWCGVVVLGLVVTGLVTI) form a helical membrane-spanning segment. Residues 1184–1189 (EGLCRY) are Lumenal-facing. A helical membrane pass occupies residues 1190-1210 (VVAVGILMSMELGPEIVALVL). Over 1211-1235 (LQAVFDMRTGLLVAFAVKRAYTTRE) the chain is Cytoplasmic. A helical transmembrane segment spans residues 1236 to 1256 (AVVTYFLLLVLELGFPEASLS). Residues 1257 to 1295 (NIWKWADSLAMGTLILQACSQEGRARVGYLLAAMMTQKD) lie on the Lumenal side of the membrane. A helical transmembrane segment spans residues 1296 to 1316 (MAIIHTGLTIFLSAATAMAVW). Residues 1317–1361 (SMIKGQRDQKGLSWATPLVGLFGGEGVGLRLLAFRRLAERRNRRS) are Cytoplasmic-facing. Residues 1362-1379 (FSEPLTVVGVMLTVASGM) traverse the membrane as a helical segment. Over 1380–1384 (VRHTS) the chain is Lumenal. Residues 1385–1405 (QEALCALVAGAFLLLMMVLGT) traverse the membrane as a helical segment. Over 1406-1458 (RKMQLIAEWCGEVEWNPDLVNEGGEVNLKVRQDAMGNLHLTEVEKEERAMALW) the chain is Cytoplasmic. Residues 1412–1451 (AEWCGEVEWNPDLVNEGGEVNLKVRQDAMGNLHLTEVEKE) form an interacts with and activates NS3 protease region. Positions 1459 to 1479 (LLAGLVASAFHWAGILIVLAI) form an intramembrane region, helical. Residues 1480–2162 (WTFFEMLSSG…RMAERDAPEA (683 aa)) are Cytoplasmic-facing. In terms of domain architecture, Peptidase S7 spans 1492–1671 (SELVFSGQGT…EAEKSRPELP (180 aa)). Active-site charge relay system; for serine protease NS3 activity residues include H1545, D1569, and S1629. The Helicase ATP-binding domain occupies 1677–1833 (TGWMSKGQIT…ESNGAIMSEE (157 aa)). Residue 1690–1697 (MHPGSGKT) participates in ATP binding. Residues 1781 to 1784 (DEAH) carry the DEAH box motif. The Helicase C-terminal domain maps to 1844 to 2002 (GFDWITEYEG…TLRGPVATFY (159 aa)). The residue at position 1885 (K1885) is an N6-acetyllysine; by host. Residues 2163-2183 (FLTIVEVAVLGVATLGILWCF) traverse the membrane as a helical segment. Topologically, residues 2184 to 2191 (VARTSVSR) are lumenal. Residues 2192 to 2211 (MFLGTVVLFAALLLLWIGGV) constitute an intramembrane region (helical). D2212 is a topological domain (lumenal). The chain crosses the membrane as a helical span at residues 2213–2233 (YGYMAGIALIFYIFLTVLQPE). Residues 2234 to 2246 (PGKQRSSDDNRLA) are Cytoplasmic-facing. A helical membrane pass occupies residues 2247 to 2267 (YFLLGLLSLAGLVTANEMGML). Over 2268–2301 (DKTKADLAGLMWHGEQRHPAWEEWTNVDIQPARS) the chain is Lumenal. The helical intramembrane region spans 2302–2322 (WGTYVLIVSLFTPYMLHQLQT). The Lumenal portion of the chain corresponds to 2323–2345 (KIQQLVNSSVASGAQAMRDLGGG). Residues 2346 to 2366 (TPFFGVAGHVIALGVTSLVGA) constitute an intramembrane region (helical). Over 2367-2368 (TP) the chain is Lumenal. Residues 2369-2389 (LSLGLGVALAAFHLAIVASGL) traverse the membrane as a helical segment. Residues 2390 to 2432 (EAELTQRAHRVFFSAMVKNPMVDGDVINPFPDGEPKPVLYERR) lie on the Cytoplasmic side of the membrane. Residues 2433–2453 (MSLILAIALCMVSVVLNRTAA) traverse the membrane as a helical segment. Over 2454 to 2476 (SMTEAGAVGLAALGQLVHPETET) the chain is Lumenal. The chain crosses the membrane as a helical span at residues 2477-2497 (LWTMPMACGMAGLVRGSFWGL). Topologically, residues 2498 to 3416 (LPMGHRLWLK…WDLKLESNII (919 aa)) are cytoplasmic. The mRNA cap 0-1 NS5-type MT domain occupies 2514–2778 (GGADGETLGD…EVDLGTGTRC (265 aa)). S2569 lines the S-adenosyl-L-methionine pocket. Position 2569 is a phosphoserine (S2569). The active-site For 2'-O-MTase activity is K2574. 6 residues coordinate S-adenosyl-L-methionine: G2599, W2600, T2617, I2618, D2644, and V2645. Catalysis depends on D2659, which acts as the For 2'-O-MTase activity. I2660 is a binding site for S-adenosyl-L-methionine. Catalysis depends on for 2'-O-MTase activity residues K2696 and E2732. Positions 2732–2736 (EMYFS) are interaction with host SCRIB. Residue Y2734 coordinates S-adenosyl-L-methionine. Zn(2+)-binding residues include E2952, H2956, C2961, and C2964. Residues 3042–3191 (GLFYADDTAG…RPIDDRFGKA (150 aa)) enclose the RdRp catalytic domain. H3226, C3242, and C3361 together coordinate Zn(2+).

In the N-terminal section; belongs to the class I-like SAM-binding methyltransferase superfamily. mRNA cap 0-1 NS5-type methyltransferase family. As to quaternary structure, homodimer. Interacts (via N-terminus) with host EXOC1 (via C-terminus); this interaction results in EXOC1 degradation through the proteasome degradation pathway. Forms heterodimers with envelope protein E in the endoplasmic reticulum and Golgi. In terms of assembly, homodimer; in the endoplasmic reticulum and Golgi. Interacts with protein prM. Interacts with non-structural protein 1. As to quaternary structure, homodimer; Homohexamer when secreted. Interacts with envelope protein E. Interacts (via N-terminus) with serine protease NS3. In terms of assembly, forms a heterodimer with serine protease NS3. May form homooligomers. As to quaternary structure, forms a heterodimer with NS2B. Interacts with NS4B. Interacts with unphosphorylated RNA-directed RNA polymerase NS5; this interaction stimulates RNA-directed RNA polymerase NS5 guanylyltransferase activity. Interacts with serine protease NS3. In terms of assembly, homodimer. Interacts with host STAT2; this interaction inhibits the phosphorylation of the latter, and, when all viral proteins are present (polyprotein), targets STAT2 for degradation. Interacts with serine protease NS3. Specific enzymatic cleavages in vivo yield mature proteins. Cleavages in the lumen of endoplasmic reticulum are performed by host signal peptidase, whereas cleavages in the cytoplasmic side are performed by serine protease NS3. Signal cleavage at the 2K-4B site requires a prior NS3 protease-mediated cleavage at the 4A-2K site. In terms of processing, cleaved in post-Golgi vesicles by a host furin, releasing the mature small envelope protein M, and peptide pr. This cleavage is incomplete as up to 30% of viral particles still carry uncleaved prM. Post-translationally, N-glycosylated. N-glycosylated. The excreted form is glycosylated and this is required for efficient secretion of the protein from infected cells. In terms of processing, acetylated by host KAT5. Acetylation modulates NS3 RNA-binding and unwinding activities and plays an important positive role for viral replication. Post-translationally, phosphorylated on serines residues. This phosphorylation may trigger NS5 nuclear localization.

The protein localises to the virion. It is found in the host nucleus. It localises to the host cytoplasm. Its subcellular location is the host perinuclear region. The protein resides in the secreted. The protein localises to the virion membrane. It is found in the host endoplasmic reticulum membrane. The catalysed reaction is Selective hydrolysis of -Xaa-Xaa-|-Yaa- bonds in which each of the Xaa can be either Arg or Lys and Yaa can be either Ser or Ala.. It catalyses the reaction RNA(n) + a ribonucleoside 5'-triphosphate = RNA(n+1) + diphosphate. The enzyme catalyses a ribonucleoside 5'-triphosphate + H2O = a ribonucleoside 5'-diphosphate + phosphate + H(+). It carries out the reaction ATP + H2O = ADP + phosphate + H(+). The catalysed reaction is a 5'-end (5'-triphosphoguanosine)-ribonucleoside in mRNA + S-adenosyl-L-methionine = a 5'-end (N(7)-methyl 5'-triphosphoguanosine)-ribonucleoside in mRNA + S-adenosyl-L-homocysteine. It catalyses the reaction a 5'-end (N(7)-methyl 5'-triphosphoguanosine)-ribonucleoside in mRNA + S-adenosyl-L-methionine = a 5'-end (N(7)-methyl 5'-triphosphoguanosine)-(2'-O-methyl-ribonucleoside) in mRNA + S-adenosyl-L-homocysteine + H(+). Functionally, plays a role in virus budding by binding to the cell membrane and gathering the viral RNA into a nucleocapsid that forms the core of a mature virus particle. During virus entry, may induce genome penetration into the host cytoplasm after hemifusion induced by the surface proteins. Can migrate to the cell nucleus where it modulates host functions. In terms of biological role, inhibits RNA silencing by interfering with host Dicer. Prevents premature fusion activity of envelope proteins in trans-Golgi by binding to envelope protein E at pH6.0. After virion release in extracellular space, gets dissociated from E dimers. Its function is as follows. Acts as a chaperone for envelope protein E during intracellular virion assembly by masking and inactivating envelope protein E fusion peptide. prM is the only viral peptide matured by host furin in the trans-Golgi network probably to avoid catastrophic activation of the viral fusion activity in acidic Golgi compartment prior to virion release. prM-E cleavage is inefficient, and many virions are only partially matured. These uncleaved prM would play a role in immune evasion. Functionally, may play a role in virus budding. Exerts cytotoxic effects by activating a mitochondrial apoptotic pathway through M ectodomain. May display a viroporin activity. In terms of biological role, binds to host cell surface receptor and mediates fusion between viral and cellular membranes. Envelope protein is synthesized in the endoplasmic reticulum in the form of heterodimer with protein prM. They play a role in virion budding in the ER, and the newly formed immature particle is covered with 60 spikes composed of heterodimer between precursor prM and envelope protein E. The virion is transported to the Golgi apparatus where the low pH causes dissociation of PrM-E heterodimers and formation of E homodimers. prM-E cleavage is inefficient, and many virions are only partially matured. These uncleaved prM would play a role in immune evasion. Involved in immune evasion, pathogenesis and viral replication. Once cleaved off the polyprotein, is targeted to three destinations: the viral replication cycle, the plasma membrane and the extracellular compartment. Essential for viral replication. Required for formation of the replication complex and recruitment of other non-structural proteins to the ER-derived membrane structures. Excreted as a hexameric lipoparticle that plays a role against host immune response. Antagonizing the complement function. Binds to the host macrophages and dendritic cells. Inhibits signal transduction originating from Toll-like receptor 3 (TLR3). Its function is as follows. Component of the viral RNA replication complex that functions in virion assembly and antagonizes the host immune response. Functionally, required cofactor for the serine protease function of NS3. May have membrane-destabilizing activity and form viroporins. In terms of biological role, displays three enzymatic activities: serine protease, NTPase and RNA helicase. NS3 serine protease, in association with NS2B, performs its autocleavage and cleaves the polyprotein at dibasic sites in the cytoplasm: C-prM, NS2A-NS2B, NS2B-NS3, NS3-NS4A, NS4A-2K and NS4B-NS5. NS3 RNA helicase binds RNA and unwinds dsRNA in the 3' to 5' direction. Regulates the ATPase activity of the NS3 helicase activity. NS4A allows NS3 helicase to conserve energy during unwinding. Its function is as follows. Functions as a signal peptide for NS4B and is required for the interferon antagonism activity of the latter. Functionally, induces the formation of ER-derived membrane vesicles where the viral replication takes place. Inhibits interferon (IFN)-induced host STAT1 phosphorylation and nuclear translocation, thereby preventing the establishment of cellular antiviral state by blocking the IFN-alpha/beta pathway. Inhibits STAT2 translocation in the nucleus after IFN-alpha treatment. In terms of biological role, replicates the viral (+) and (-) RNA genome, and performs the capping of genomes in the cytoplasm. NS5 methylates viral RNA cap at guanine N-7 and ribose 2'-O positions. Besides its role in RNA genome replication, also prevents the establishment of cellular antiviral state by blocking the interferon-alpha/beta (IFN-alpha/beta) signaling pathway. Inhibits host TYK2 and STAT2 phosphorylation, thereby preventing activation of JAK-STAT signaling pathway. The protein is Genome polyprotein of Homo sapiens (Human).